The chain runs to 251 residues: Aliphatic sulfonates import ATP-binding protein SsuB (251 aa).

An ABC transporter domain is found at 3 to 231 (VSINEVSKYF…PRSKNSESFQ (229 aa)). Residue 39 to 46 (GPSGCGKS) coordinates ATP.

Belongs to the ABC transporter superfamily. Aliphatic sulfonates importer (TC 3.A.1.17.2) family. In terms of assembly, the complex is composed of two ATP-binding proteins (SsuB), two transmembrane proteins (SsuC) and a solute-binding protein (SsuA).

The protein resides in the cell membrane. The enzyme catalyses ATP + H2O + aliphatic sulfonate-[sulfonate-binding protein]Side 1 = ADP + phosphate + aliphatic sulfonateSide 2 + [sulfonate-binding protein]Side 1.. Its function is as follows. Part of the ABC transporter complex SsuABC involved in aliphatic sulfonates import. Responsible for energy coupling to the transport system. This chain is Aliphatic sulfonates import ATP-binding protein SsuB, found in Bacillus cereus (strain ZK / E33L).